Consider the following 55-residue polypeptide: Preprotein translocase subunit SecG (55 aa).

Over 1–29 the chain is Cytoplasmic; it reads MAKKSGSGLQSSAGLMRYYEADKNAVQVQ. Residues 30–51 form a helical membrane-spanning segment; sequence PKVVLIVGAIVGIAVLFLSAVN. Topologically, residues 52-55 are extracellular; that stretch reads GFWP.

It belongs to the SEC61-beta family. Component of the protein translocase complex. Heterotrimer consisting of alpha (SecY), beta (SecG) and gamma (SecE) subunits. Can form oligomers of the heterotrimer.

It localises to the cell membrane. Its function is as follows. Involved in protein export. The function of the beta subunit is unknown, but it may be involved in stabilization of the trimeric complex. The protein is Preprotein translocase subunit SecG of Methanosarcina barkeri (strain Fusaro / DSM 804).